The primary structure comprises 460 residues: NADH-ubiquinone oxidoreductase chain 4 (460 aa).

Helical transmembrane passes span 22–42, 61–81, 94–113, 117–139, 148–168, 195–217, 225–245, 258–278, 285–304, 308–330, 351–371, 394–414, and 436–456; these read WLWP…ITWL, PLST…LLAS, RMYI…AFGA, IMFY…RWGN, TYFL…LLML, IWWA…HLWL, PVAG…YGMM, MVYP…SICL, SLIA…GILI, WGFT…LFCL, IALP…LALP, LILT…MFLM, and LLMA…ALLW.

Belongs to the complex I subunit 4 family.

The protein localises to the mitochondrion membrane. The catalysed reaction is a ubiquinone + NADH + 5 H(+)(in) = a ubiquinol + NAD(+) + 4 H(+)(out). Core subunit of the mitochondrial membrane respiratory chain NADH dehydrogenase (Complex I) that is believed to belong to the minimal assembly required for catalysis. Complex I functions in the transfer of electrons from NADH to the respiratory chain. The immediate electron acceptor for the enzyme is believed to be ubiquinone. In Gadus morhua (Atlantic cod), this protein is NADH-ubiquinone oxidoreductase chain 4 (MT-ND4).